The following is a 104-amino-acid chain: MGTRLKVLRVFKQLQRTRMDVFKDDDIALKAARLKINEEFRKNRNETSEENINEMIKLGSNVETVLRESVLQMEHVGEDKLLLRPRKSLLLENVPYCDEPRKKS.

This sequence belongs to the complex I LYR family. Interacts with UQCRFS1.

The protein localises to the mitochondrion matrix. In terms of biological role, assembly factor required for Rieske Fe-S protein UQCRFS1 incorporation into the cytochrome b-c1 (CIII) complex. Functions as a chaperone, binding to this subunit within the mitochondrial matrix and stabilizing it prior to its translocation and insertion into the late CIII dimeric intermediate within the mitochondrial inner membrane. The polypeptide is Complex III assembly factor LYRM7 (lyrm7) (Tetraodon nigroviridis (Spotted green pufferfish)).